Here is a 412-residue protein sequence, read N- to C-terminus: Serine hydroxymethyltransferase (412 aa).

(6S)-5,6,7,8-tetrahydrofolate is bound by residues L117 and 121–123 (GHL). K226 carries the N6-(pyridoxal phosphate)lysine modification. 349–351 (SPF) lines the (6S)-5,6,7,8-tetrahydrofolate pocket.

This sequence belongs to the SHMT family. Homodimer. Requires pyridoxal 5'-phosphate as cofactor.

Its subcellular location is the cytoplasm. It carries out the reaction (6R)-5,10-methylene-5,6,7,8-tetrahydrofolate + glycine + H2O = (6S)-5,6,7,8-tetrahydrofolate + L-serine. It participates in one-carbon metabolism; tetrahydrofolate interconversion. It functions in the pathway amino-acid biosynthesis; glycine biosynthesis; glycine from L-serine: step 1/1. Its function is as follows. Catalyzes the reversible interconversion of serine and glycine with tetrahydrofolate (THF) serving as the one-carbon carrier. This reaction serves as the major source of one-carbon groups required for the biosynthesis of purines, thymidylate, methionine, and other important biomolecules. Also exhibits THF-independent aldolase activity toward beta-hydroxyamino acids, producing glycine and aldehydes, via a retro-aldol mechanism. This Halothermothrix orenii (strain H 168 / OCM 544 / DSM 9562) protein is Serine hydroxymethyltransferase.